Consider the following 435-residue polypeptide: Histidine--tRNA ligase (435 aa).

The protein belongs to the class-II aminoacyl-tRNA synthetase family. In terms of assembly, homodimer.

It is found in the cytoplasm. The catalysed reaction is tRNA(His) + L-histidine + ATP = L-histidyl-tRNA(His) + AMP + diphosphate + H(+). This Synechococcus sp. (strain ATCC 27144 / PCC 6301 / SAUG 1402/1) (Anacystis nidulans) protein is Histidine--tRNA ligase.